The primary structure comprises 128 residues: Large ribosomal subunit protein bL17 (128 aa).

This sequence belongs to the bacterial ribosomal protein bL17 family. Part of the 50S ribosomal subunit. Contacts protein L32.

This chain is Large ribosomal subunit protein bL17, found in Edwardsiella ictaluri (strain 93-146).